Here is a 341-residue protein sequence, read N- to C-terminus: Very-long-chain 3-oxoacyl-CoA reductase (341 aa).

A helical transmembrane segment spans residues 22-42 (AIYGFLLAGVAAFAAPIVSTI). NADP(+) is bound by residues leucine 67, aspartate 123, aspartate 131, asparagine 150, tyrosine 217, lysine 221, isoleucine 250, and threonine 252. Tyrosine 217 acts as the Proton donor in catalysis. Lysine 221 functions as the Lowers pKa of active site Tyr in the catalytic mechanism.

This sequence belongs to the short-chain dehydrogenases/reductases (SDR) family.

The protein resides in the endoplasmic reticulum membrane. It carries out the reaction a very-long-chain (3R)-3-hydroxyacyl-CoA + NADP(+) = a very-long-chain 3-oxoacyl-CoA + NADPH + H(+). The protein operates within lipid metabolism; fatty acid biosynthesis. Its function is as follows. Component of the microsomal membrane bound fatty acid elongation system, which produces the 26-carbon very long-chain fatty acids (VLCFA) from palmitate. Catalyzes the reduction of the 3-ketoacyl-CoA intermediate that is formed in each cycle of fatty acid elongation. VLCFAs serve as precursors for ceramide and sphingolipids. In Phaeosphaeria nodorum (strain SN15 / ATCC MYA-4574 / FGSC 10173) (Glume blotch fungus), this protein is Very-long-chain 3-oxoacyl-CoA reductase.